The following is a 341-amino-acid chain: Basic membrane protein B (341 aa).

A signal peptide spans 1-14 (MRIVIFILGILLTS). Cys-15 carries N-palmitoyl cysteine lipidation. Residue Cys-15 is the site of S-diacylglycerol cysteine attachment.

Belongs to the BMP lipoprotein family. As to quaternary structure, monomer.

It is found in the cell inner membrane. Its function is as follows. May be part of an ABC-type nucleoside uptake system involved in the purine salvage pathway. This Borrelia garinii subsp. bavariensis (strain ATCC BAA-2496 / DSM 23469 / PBi) (Borreliella bavariensis) protein is Basic membrane protein B (bmpB).